A 689-amino-acid chain; its full sequence is Glycine--tRNA ligase beta subunit (689 aa).

Belongs to the class-II aminoacyl-tRNA synthetase family. Tetramer of two alpha and two beta subunits.

It is found in the cytoplasm. It catalyses the reaction tRNA(Gly) + glycine + ATP = glycyl-tRNA(Gly) + AMP + diphosphate. This chain is Glycine--tRNA ligase beta subunit, found in Yersinia pseudotuberculosis serotype O:1b (strain IP 31758).